A 209-amino-acid chain; its full sequence is Ribosomal RNA large subunit methyltransferase E (209 aa).

S-adenosyl-L-methionine-binding residues include Gly63, Trp65, Asp83, Asp99, and Asp124. Catalysis depends on Lys164, which acts as the Proton acceptor.

The protein belongs to the class I-like SAM-binding methyltransferase superfamily. RNA methyltransferase RlmE family.

It is found in the cytoplasm. It carries out the reaction uridine(2552) in 23S rRNA + S-adenosyl-L-methionine = 2'-O-methyluridine(2552) in 23S rRNA + S-adenosyl-L-homocysteine + H(+). Its function is as follows. Specifically methylates the uridine in position 2552 of 23S rRNA at the 2'-O position of the ribose in the fully assembled 50S ribosomal subunit. The polypeptide is Ribosomal RNA large subunit methyltransferase E (Aeromonas hydrophila subsp. hydrophila (strain ATCC 7966 / DSM 30187 / BCRC 13018 / CCUG 14551 / JCM 1027 / KCTC 2358 / NCIMB 9240 / NCTC 8049)).